Here is a 1624-residue protein sequence, read N- to C-terminus: ATP-binding cassette sub-family A member 9 (1624 aa).

A helical transmembrane segment spans residues 31–51 (LLEWLFSFLLVLFLYLFFSNL). Residues N120 and N195 are each glycosylated (N-linked (GlcNAc...) asparagine). The next 6 membrane-spanning stretches (helical) occupy residues 221 to 243 (VATDFFIFFCIISFSTFIYYVSV), 269 to 289 (SWGLMYAGFILIMATLMALIV), 300 to 320 (FVMVFTLFLLYGLSLITLAFL), 329 to 349 (FLTGLVVFLLIVFWGILGFPA), 354 to 374 (LPAFLEWTLCLLSPFAFTVGM), and 398 to 418 (LIIATLFMLVFDTLLYLVLTL). The region spanning 481-716 (IRIKNLKKEY…WGIGYHLSLH (236 aa)) is the ABC transporter 1 domain. Residue 517-524 (GHSGAGKT) coordinates ATP. A helical membrane pass occupies residues 864–884 (LWTILLLFGISFIPQLLEHLF). N949 carries an N-linked (GlcNAc...) asparagine glycan. Helical transmembrane passes span 1026–1046 (TFFWIPMAASFTPYIAMSSIG), 1065–1085 (AYWFGQALVDVSLYFLILLLM), 1108–1128 (ILCSIGYVSSLVFLTYVISFI), 1136–1156 (SGIWSFFFLIVVIFSIVATDL), 1163–1183 (GLFFGTMLIPPFTLIGSLFIF), and 1200–1220 (EIVYLALLIPYLHFLIFLFIL). The region spanning 1288 to 1521 (LRKEYAGKKK…FGKDYLLEMK (234 aa)) is the ABC transporter 2 domain. 1326 to 1333 (GHNGAGKS) provides a ligand contact to ATP.

It belongs to the ABC transporter superfamily. ABCA family. Widely expressed with higher expression in heart.

The protein localises to the membrane. Transporter that may play a role in monocyte differentiation and lipid transport and homeostasis. The chain is ATP-binding cassette sub-family A member 9 (ABCA9) from Homo sapiens (Human).